The sequence spans 185 residues: Ribosome-recycling factor (185 aa).

The disordered stretch occupies residues Ile139–Lys159. Residues Ser141–Lys159 show a composition bias toward basic and acidic residues.

This sequence belongs to the RRF family.

The protein resides in the cytoplasm. Functionally, responsible for the release of ribosomes from messenger RNA at the termination of protein biosynthesis. May increase the efficiency of translation by recycling ribosomes from one round of translation to another. This Sorangium cellulosum (strain So ce56) (Polyangium cellulosum (strain So ce56)) protein is Ribosome-recycling factor.